Reading from the N-terminus, the 417-residue chain is Serine hydroxymethyltransferase (417 aa).

(6S)-5,6,7,8-tetrahydrofolate-binding positions include Leu-112 and 116–118 (GHL). The residue at position 221 (Lys-221) is an N6-(pyridoxal phosphate)lysine. Glu-247 is a binding site for (6S)-5,6,7,8-tetrahydrofolate.

This sequence belongs to the SHMT family. As to quaternary structure, homodimer. It depends on pyridoxal 5'-phosphate as a cofactor.

It localises to the cytoplasm. It catalyses the reaction (6R)-5,10-methylene-5,6,7,8-tetrahydrofolate + glycine + H2O = (6S)-5,6,7,8-tetrahydrofolate + L-serine. It participates in one-carbon metabolism; tetrahydrofolate interconversion. The protein operates within amino-acid biosynthesis; glycine biosynthesis; glycine from L-serine: step 1/1. Catalyzes the reversible interconversion of serine and glycine with tetrahydrofolate (THF) serving as the one-carbon carrier. This reaction serves as the major source of one-carbon groups required for the biosynthesis of purines, thymidylate, methionine, and other important biomolecules. Also exhibits THF-independent aldolase activity toward beta-hydroxyamino acids, producing glycine and aldehydes, via a retro-aldol mechanism. The polypeptide is Serine hydroxymethyltransferase (Borreliella afzelii (strain PKo) (Borrelia afzelii)).